Reading from the N-terminus, the 345-residue chain is S-adenosylmethionine:tRNA ribosyltransferase-isomerase (345 aa).

This sequence belongs to the QueA family. As to quaternary structure, monomer.

Its subcellular location is the cytoplasm. The catalysed reaction is 7-aminomethyl-7-carbaguanosine(34) in tRNA + S-adenosyl-L-methionine = epoxyqueuosine(34) in tRNA + adenine + L-methionine + 2 H(+). The protein operates within tRNA modification; tRNA-queuosine biosynthesis. In terms of biological role, transfers and isomerizes the ribose moiety from AdoMet to the 7-aminomethyl group of 7-deazaguanine (preQ1-tRNA) to give epoxyqueuosine (oQ-tRNA). In Helicobacter acinonychis (strain Sheeba), this protein is S-adenosylmethionine:tRNA ribosyltransferase-isomerase.